A 203-amino-acid chain; its full sequence is NADH-quinone oxidoreductase subunit C (203 aa).

It belongs to the complex I 30 kDa subunit family. NDH-1 is composed of 14 different subunits. Subunits NuoB, C, D, E, F, and G constitute the peripheral sector of the complex.

Its subcellular location is the cell inner membrane. The enzyme catalyses a quinone + NADH + 5 H(+)(in) = a quinol + NAD(+) + 4 H(+)(out). NDH-1 shuttles electrons from NADH, via FMN and iron-sulfur (Fe-S) centers, to quinones in the respiratory chain. The immediate electron acceptor for the enzyme in this species is believed to be ubiquinone. Couples the redox reaction to proton translocation (for every two electrons transferred, four hydrogen ions are translocated across the cytoplasmic membrane), and thus conserves the redox energy in a proton gradient. The chain is NADH-quinone oxidoreductase subunit C from Methylibium petroleiphilum (strain ATCC BAA-1232 / LMG 22953 / PM1).